A 543-amino-acid polypeptide reads, in one-letter code: Formin-binding protein 1-like (543 aa).

The region spanning 1-263 (MSWGTELWDQ…AAKSVDERRD (263 aa)) is the F-BAR domain. 2 coiled-coil regions span residues 66 to 258 (FTSC…AKSV) and 334 to 426 (LEDF…QRSE). Positions 339 to 416 (HLPPEQRRKR…IHKNEGWLSE (78 aa)) constitute an REM-1 domain. The tract at residues 424 to 467 (RSERRHSAEANHLVAQGRESPEGSYTEDANQEGRVQPQHHAHPE) is disordered. Positions 479–540 (PAIGHCKSLY…PTSYIEITLE (62 aa)) constitute an SH3 domain.

This sequence belongs to the FNBP1 family. Homodimerizes, the dimers can polymerize end-to-end to form filamentous structures. Interacts with GTP-bound cdc42 and wasl/n-wasp.

The protein resides in the cytoplasm. It is found in the cytoskeleton. The protein localises to the cell cortex. It localises to the cytoplasmic vesicle. Its subcellular location is the cell membrane. In terms of biological role, required to coordinate membrane tubulation with reorganization of the actin cytoskeleton during endocytosis. Essential for autophagy of intracellular bacterial pathogens. Promotes cdc42-induced actin polymerization by activating the wasl-waspip complex, the predominant form of wasl/n-wasp in cells. The polypeptide is Formin-binding protein 1-like (fnbp1l) (Xenopus laevis (African clawed frog)).